The primary structure comprises 296 residues: MTLFKGSGVALVTPFKDGKVNFKKLEEILNWHVECGTDAIIVCGTTGEASTMTEEERKETIKFTVDTINKRIPVIAGTGSNNTEAAIKMSKWAESIGVDGVLVITPYYNKTTQKGIFEHFKAINDSINIPIVLYNVPSRTGLNITPKTLLKLCDLNNVVAIKEASGNFSQLVEMKALCRDKIDLYSGNDDQVVPLLSLGGIGVISVAANIYPKEMHDICDLYMNGKTHEALKIQLDMLDVINSLFIETNPIPIKTAMNLKGMDVGALRLPLCDMEENNLEVLKNALENYNKTSREA.

Pyruvate is bound at residue T46. Y134 functions as the Proton donor/acceptor in the catalytic mechanism. K162 serves as the catalytic Schiff-base intermediate with substrate. Position 204 (I204) interacts with pyruvate.

Belongs to the DapA family. In terms of assembly, homotetramer; dimer of dimers.

The protein resides in the cytoplasm. It catalyses the reaction L-aspartate 4-semialdehyde + pyruvate = (2S,4S)-4-hydroxy-2,3,4,5-tetrahydrodipicolinate + H2O + H(+). Its pathway is amino-acid biosynthesis; L-lysine biosynthesis via DAP pathway; (S)-tetrahydrodipicolinate from L-aspartate: step 3/4. In terms of biological role, catalyzes the condensation of (S)-aspartate-beta-semialdehyde [(S)-ASA] and pyruvate to 4-hydroxy-tetrahydrodipicolinate (HTPA). This is 4-hydroxy-tetrahydrodipicolinate synthase from Clostridium novyi (strain NT).